A 54-amino-acid polypeptide reads, in one-letter code: UPF0391 membrane protein Bpro_0879 (54 aa).

Transmembrane regions (helical) follow at residues 6 to 26 (VVFL…IAAG) and 30 to 50 (IAKI…VMGL).

This sequence belongs to the UPF0391 family.

It is found in the cell membrane. The chain is UPF0391 membrane protein Bpro_0879 from Polaromonas sp. (strain JS666 / ATCC BAA-500).